Reading from the N-terminus, the 396-residue chain is DNA polymerase IV (396 aa).

In terms of domain architecture, UmuC spans 2–182; it reads ILHVDMDAFY…LPVSRLWGVG (181 aa). Residues D6 and D100 each coordinate Mg(2+). E101 is an active-site residue.

Belongs to the DNA polymerase type-Y family. In terms of assembly, monomer. The cofactor is Mg(2+).

Its subcellular location is the cytoplasm. The enzyme catalyses DNA(n) + a 2'-deoxyribonucleoside 5'-triphosphate = DNA(n+1) + diphosphate. Functionally, poorly processive, error-prone DNA polymerase involved in untargeted mutagenesis. Copies undamaged DNA at stalled replication forks, which arise in vivo from mismatched or misaligned primer ends. These misaligned primers can be extended by PolIV. Exhibits no 3'-5' exonuclease (proofreading) activity. May be involved in translesional synthesis, in conjunction with the beta clamp from PolIII. This chain is DNA polymerase IV, found in Rhodopirellula baltica (strain DSM 10527 / NCIMB 13988 / SH1).